We begin with the raw amino-acid sequence, 348 residues long: Guanosine ABC transporter permease protein NupP (348 aa).

Transmembrane regions (helical) follow at residues 8 to 28, 61 to 81, 85 to 105, 107 to 127, 136 to 156, 189 to 209, 237 to 257, 277 to 297, and 320 to 340; these read LLVPLIAIILGLAAGALIMLV, YILSGLAVAFAFRTGLFNIGV, LLVGWTAAVWVGTAFDGPAYI, LPLALITAAAAGGLWGFIPGI, EVIVTIMMNYIALHMTNYIIS, LHLGIIVALLAAVIMWFIINK, IMTSMLISGAFAGLAGAMEGL, IAVALLGGNTAVGVVLAACLL, and IVIAIIILFVASSYAIRFVMG.

The protein belongs to the binding-protein-dependent transport system permease family. The complex is composed of two ATP-binding proteins (NupO), two transmembrane proteins (NupP and NupQ) and a solute-binding protein (NupN).

It is found in the cell membrane. In terms of biological role, part of an ABC transporter complex involved in the uptake of guanosine. Responsible for the translocation of the substrate across the membrane. May be a nucleoside transporter of broad specificity but with various affinities for different substrates. The polypeptide is Guanosine ABC transporter permease protein NupP (Bacillus subtilis (strain 168)).